A 99-amino-acid polypeptide reads, in one-letter code: Cytochrome c-555 (99 aa).

4 residues coordinate heme c: Cys23, Cys26, His27, and Met73.

Post-translationally, binds 1 heme c group covalently per subunit.

This is Cytochrome c-555 from Prosthecochloris aestuarii.